The primary structure comprises 131 residues: Ribonuclease P protein component (131 aa).

The protein belongs to the RnpA family. As to quaternary structure, consists of a catalytic RNA component (M1 or rnpB) and a protein subunit.

The catalysed reaction is Endonucleolytic cleavage of RNA, removing 5'-extranucleotides from tRNA precursor.. Its function is as follows. RNaseP catalyzes the removal of the 5'-leader sequence from pre-tRNA to produce the mature 5'-terminus. It can also cleave other RNA substrates such as 4.5S RNA. The protein component plays an auxiliary but essential role in vivo by binding to the 5'-leader sequence and broadening the substrate specificity of the ribozyme. The chain is Ribonuclease P protein component from Synechococcus sp. (strain WH7803).